Here is a 1048-residue protein sequence, read N- to C-terminus: Nonsense-mediated mRNA decay protein 5 (1048 aa).

Positions 24–104 (AETHLKNASK…KDMLIKTMVS (81 aa)) constitute an Importin N-terminal domain. At S977 the chain carries Phosphoserine.

As to quaternary structure, GTP-bound Ran dissociates the isolated NMD5/TFIIS complex.

It localises to the nucleus. Its subcellular location is the cytoplasm. Functionally, active in protein import into the nucleus. Its major import substrate is transcription elongation factor TFIIS. The polypeptide is Nonsense-mediated mRNA decay protein 5 (NMD5) (Saccharomyces cerevisiae (strain ATCC 204508 / S288c) (Baker's yeast)).